The sequence spans 235 residues: Meiotically up-regulated gene 123 protein (235 aa).

Residues 1 to 14 (MERLATRSSHDDPY) are compositionally biased toward basic and acidic residues. 3 disordered regions span residues 1–34 (MERLATRSSHDDPYSRSSLPTSNAINSNHESNGS), 58–83 (PLHSSPSIKSSSQNGKSSSKGLGGMR), and 169–235 (SRAD…FDSD). A compositionally biased stretch (polar residues) spans 15-34 (SRSSLPTSNAINSNHESNGS). The span at 61–77 (SSPSIKSSSQNGKSSSK) shows a compositional bias: low complexity. Residues 176–202 (ETTQSDGFESRSGSPTHDIQSYLVNRR) show a composition bias toward polar residues. A phosphoserine mark is found at Ser180, Ser187, and Ser189. The residue at position 191 (Thr191) is a Phosphothreonine.

It is found in the cytoplasm. Its subcellular location is the nucleus. Its function is as follows. Involved in sporulation and has a role in meiosis. In Schizosaccharomyces pombe (strain 972 / ATCC 24843) (Fission yeast), this protein is Meiotically up-regulated gene 123 protein (mug123).